The primary structure comprises 338 residues: MEMTHYEKTPLIRQVFNNGKTNSWFYVKHEILQPGGSFKSRGIGHLIRKNNEEALSEGSGKLAVFSSSGGNAGLAAATACRSMALNCSVVVPKTTKPRMVKKIQSAGAKVIIHGDHWGEADEYLRHELMAQESQHGSKTLYVHPFDNETIWEGHSTIVDEIIEQLKENDISLPRVKALVCSVGGGGLFSGIIKGLERNHLAEKIPVVAVETAGCDVLNKSLKKGSPVTLEKLTSVATSLGSPYIASFAFESFNKYGCKSVVLSDQDVLATCLRYADDYNFIVEPACGASLHLCYHPEILEDILEQKIYEDDIVIIIACGGSCMTYEDFVKASSTLNVS.

An N6-(pyridoxal phosphate)lysine modification is found at Lys39.

Belongs to the serine/threonine dehydratase family. Requires pyridoxal 5'-phosphate as cofactor.

It is found in the cytoplasm. It carries out the reaction L-serine = pyruvate + NH4(+). The protein operates within carbohydrate biosynthesis; gluconeogenesis. The chain is L-serine dehydratase (SDL1) from Saccharomyces cerevisiae (strain AWRI1631) (Baker's yeast).